The primary structure comprises 443 residues: EGF-containing fibulin-like extracellular matrix protein 2 (443 aa).

Residues 1-23 form the signal peptide; the sequence is MLPCASCLPGSLLLWALLLLLLG. Positions 36–81 constitute an EGF-like 1; atypical domain; sequence YTECTDGYEWDPDSQHCRDVNECLTIPEACKGEMKCINHYGGYLCL. 18 cysteine pairs are disulfide-bonded: Cys58–Cys121, Cys65–Cys80, Cys71–Cys109, Cys127–Cys140, Cys134–Cys149, Cys151–Cys162, Cys168–Cys177, Cys173–Cys186, Cys188–Cys201, Cys207–Cys217, Cys213–Cys226, Cys228–Cys241, Cys247–Cys258, Cys254–Cys267, Cys269–Cys281, Cys287–Cys300, Cys294–Cys309, and Cys315–Cys327. The EGF-like 2; calcium-binding domain occupies 123 to 163; the sequence is DVDECAQALHDCRPSQDCHNLPGSYQCTCPDGYRKIGPECV. In terms of domain architecture, EGF-like 3; calcium-binding spans 164–202; the sequence is DIDECRYRYCQHRCVNLPGSFRCQCEPGFQLGPNNRSCV. An N-linked (GlcNAc...) asparagine glycan is attached at Asn198. The EGF-like 4; calcium-binding domain occupies 203–242; that stretch reads DVNECDMGAPCEQRCFNSYGTFLCRCHQGYELHRDGFSCS. The region spanning 243–282 is the EGF-like 5; calcium-binding domain; sequence DIDECSYSSYLCQYRCINEPGRFSCHCPQGYQLLATRLCQ. The region spanning 283–328 is the EGF-like 6; calcium-binding domain; the sequence is DIDECESGAHQCSEAQTCVNFHGGYRCVDTNRCVEPYIQVSENRCL. The N-linked (GlcNAc...) asparagine glycan is linked to Asn394.

The protein belongs to the fibulin family. Homodimer; disulfide-linked. Multimer; allows heparin binding. Monomer. Interacts with FBN1 (via N-terminal domain); this interaction inhibits EFEMP2 binding to LOX and ELN. Interacts with LOX (via propeptide); this interaction is strong and facilitates formation of ternary complexes with ELN during elastic fiber assembly; this interaction limits interaction of EFEMP2 with FBLN5. Interacts with PITX2. Interacts with ELN with moderate affinity; this interaction regulates ELN self-assembly maturation stage. Interacts with FBLN5 with moderate affinity. Interacts with LOXL1 (via propeptide), LTBP1 and TGFB1 stronger than with LOXL2 and LTBP3. Interacts with PCOLCE. Interacts with collagen type IV trimer (COL4A1-COL4A1-COL4A2), NID2 and moderately with COL15A1-derived endostatin. Interacts with EMILIN1; this interaction promotes the incorporation of EFEMP2 into the extracellular matrix. Interacts with LTBP4; the LTBP4 long form (LTBP4L) has a stronger binding affinity than the LTBP4 short form and the LTBP4 long form promotes fibrillar deposition of EFEMP2. In terms of processing, N-glycosylated; contains mostly complex-type glycans. Not O-glycosylated. Cleaved by ELANE; produces a 50-55 kDa fragment. Cleaved by MMP2 and MMP9; produces several fragments.

Its subcellular location is the secreted. It localises to the extracellular space. The protein localises to the extracellular matrix. The protein resides in the basement membrane. Its function is as follows. Plays a crucial role in elastic fiber formation in tissue, and in the formation of ultrastructural connections between elastic laminae and smooth muscle cells in the aorta, therefore participates in terminal differentiation and maturation of smooth muscle cell (SMC) and in the mechanical properties and wall integrity maintenance of the aorta. In addition, is involved in the control of collagen fibril assembly in tissue throught proteolytic activation of LOX leading to cross- linking of collagen and elastin. Also promotes ELN coacervation and participates in the deposition of ELN coacervates on to microfibrils but also regulates ELN cross- linking through LOX interaction. Moreover adheres to the cells through heparin binding in a calcium-dependent manner and regulates vascularlar smooth muscle cells proliferation through angiotensin signaling. The chain is EGF-containing fibulin-like extracellular matrix protein 2 from Homo sapiens (Human).